A 448-amino-acid polypeptide reads, in one-letter code: N-succinylarginine dihydrolase (448 aa).

Residues 19-28 (AGLSSGNIAS), N110, and 137-138 (HR) each bind substrate. E174 is a catalytic residue. R216 provides a ligand contact to substrate. Residue H252 is part of the active site. D254 and N366 together coordinate substrate. C372 (nucleophile) is an active-site residue.

Belongs to the succinylarginine dihydrolase family. Homodimer.

The catalysed reaction is N(2)-succinyl-L-arginine + 2 H2O + 2 H(+) = N(2)-succinyl-L-ornithine + 2 NH4(+) + CO2. The protein operates within amino-acid degradation; L-arginine degradation via AST pathway; L-glutamate and succinate from L-arginine: step 2/5. Its function is as follows. Catalyzes the hydrolysis of N(2)-succinylarginine into N(2)-succinylornithine, ammonia and CO(2). The polypeptide is N-succinylarginine dihydrolase (Legionella pneumophila (strain Lens)).